The following is a 356-amino-acid chain: GTPase Obg (356 aa).

One can recognise an Obg domain in the interval 1 to 159; the sequence is MKFIDRVKIH…RWLRLELKLL (159 aa). Positions 160–331 constitute an OBG-type G domain; sequence ADVGLLGMPN…LVAEVARELE (172 aa). GTP is bound by residues 166–173, 191–195, 213–216, 283–286, and 312–314; these read GMPNAGKS, FTTLV, DIPG, SKID, and SAV. Mg(2+) contacts are provided by serine 173 and threonine 193.

It belongs to the TRAFAC class OBG-HflX-like GTPase superfamily. OBG GTPase family. Monomer. Mg(2+) serves as cofactor.

The protein localises to the cytoplasm. An essential GTPase which binds GTP, GDP and possibly (p)ppGpp with moderate affinity, with high nucleotide exchange rates and a fairly low GTP hydrolysis rate. Plays a role in control of the cell cycle, stress response, ribosome biogenesis and in those bacteria that undergo differentiation, in morphogenesis control. In Syntrophotalea carbinolica (strain DSM 2380 / NBRC 103641 / GraBd1) (Pelobacter carbinolicus), this protein is GTPase Obg.